We begin with the raw amino-acid sequence, 296 residues long: Acetylglutamate kinase (296 aa).

Substrate-binding positions include 66–67, arginine 88, and asparagine 191; that span reads GG.

It belongs to the acetylglutamate kinase family. ArgB subfamily.

It localises to the cytoplasm. It carries out the reaction N-acetyl-L-glutamate + ATP = N-acetyl-L-glutamyl 5-phosphate + ADP. The protein operates within amino-acid biosynthesis; L-arginine biosynthesis; N(2)-acetyl-L-ornithine from L-glutamate: step 2/4. Its function is as follows. Catalyzes the ATP-dependent phosphorylation of N-acetyl-L-glutamate. The polypeptide is Acetylglutamate kinase (Lawsonia intracellularis (strain PHE/MN1-00)).